The primary structure comprises 89 residues: Elongation factor 1-beta (89 aa).

This sequence belongs to the EF-1-beta/EF-1-delta family.

Its function is as follows. Promotes the exchange of GDP for GTP in EF-1-alpha/GDP, thus allowing the regeneration of EF-1-alpha/GTP that could then be used to form the ternary complex EF-1-alpha/GTP/AAtRNA. In Methanococcoides burtonii (strain DSM 6242 / NBRC 107633 / OCM 468 / ACE-M), this protein is Elongation factor 1-beta.